The primary structure comprises 488 residues: N-succinylglutamate 5-semialdehyde dehydrogenase (488 aa).

221–226 (GSSRTG) is a binding site for NAD(+). Catalysis depends on residues Glu244 and Cys278.

It belongs to the aldehyde dehydrogenase family. AstD subfamily.

The enzyme catalyses N-succinyl-L-glutamate 5-semialdehyde + NAD(+) + H2O = N-succinyl-L-glutamate + NADH + 2 H(+). It functions in the pathway amino-acid degradation; L-arginine degradation via AST pathway; L-glutamate and succinate from L-arginine: step 4/5. Its function is as follows. Catalyzes the NAD-dependent reduction of succinylglutamate semialdehyde into succinylglutamate. The protein is N-succinylglutamate 5-semialdehyde dehydrogenase of Pseudomonas fluorescens (strain SBW25).